A 479-amino-acid chain; its full sequence is Galactosylgalactosylxylosylprotein 3-beta-glucuronosyltransferase P (479 aa).

The Cytoplasmic portion of the chain corresponds to 1–34; it reads MKGGNYTSLGTCSGINVSGNVAGTRKMSLGKSIK. The helical; Signal-anchor for type II membrane protein transmembrane segment at 35–50 threads the bilayer; it reads MYLTIFILTTCIYMAL. The Lumenal portion of the chain corresponds to 51–479; that stretch reads YQYHISREPF…EHIDRLLVRP (429 aa). N90, N97, N98, and N271 each carry an N-linked (GlcNAc...) asparagine glycan. Over residues 94-120 the composition is skewed to low complexity; it reads NTNNNSTTTSTTTTTAPTTPTTTTTTT. Residues 94-122 form a disordered region; it reads NTNNNSTTTSTTTTTAPTTPTTTTTTTVG. Position 335 (D335) interacts with Mn(2+). E418 functions as the Proton acceptor in the catalytic mechanism. N460 is a glycosylation site (N-linked (GlcNAc...) asparagine).

It belongs to the glycosyltransferase 43 family. Mn(2+) serves as cofactor.

It is found in the golgi apparatus membrane. The catalysed reaction is 3-O-(beta-D-galactosyl-(1-&gt;3)-beta-D-galactosyl-(1-&gt;4)-beta-D-xylosyl)-L-seryl-[protein] + UDP-alpha-D-glucuronate = 3-O-(beta-D-GlcA-(1-&gt;3)-beta-D-Gal-(1-&gt;3)-beta-D-Gal-(1-&gt;4)-beta-D-Xyl)-L-seryl-[protein] + UDP + H(+). The protein operates within protein modification; protein glycosylation. In terms of biological role, involved in the biosynthesis of L2/HNK-1 carbohydrate epitope on both glycolipids and glycoproteins. Enzyme has a broad specificity. In Drosophila melanogaster (Fruit fly), this protein is Galactosylgalactosylxylosylprotein 3-beta-glucuronosyltransferase P (GlcAT-P).